The chain runs to 432 residues: Amino-acid acetyltransferase (432 aa).

The 140-residue stretch at 286–425 (ELVREAAIED…ASLYNFQRNS (140 aa)) folds into the N-acetyltransferase domain.

This sequence belongs to the acetyltransferase family. ArgA subfamily.

The protein resides in the cytoplasm. It carries out the reaction L-glutamate + acetyl-CoA = N-acetyl-L-glutamate + CoA + H(+). It functions in the pathway amino-acid biosynthesis; L-arginine biosynthesis; N(2)-acetyl-L-ornithine from L-glutamate: step 1/4. This Pseudomonas syringae pv. tomato (strain ATCC BAA-871 / DC3000) protein is Amino-acid acetyltransferase.